Here is a 487-residue protein sequence, read N- to C-terminus: Glutamyl-tRNA(Gln) amidotransferase subunit A (487 aa).

Active-site charge relay system residues include Lys-74 and Ser-149. The active-site Acyl-ester intermediate is Ser-173.

This sequence belongs to the amidase family. GatA subfamily. Heterotrimer of A, B and C subunits.

The catalysed reaction is L-glutamyl-tRNA(Gln) + L-glutamine + ATP + H2O = L-glutaminyl-tRNA(Gln) + L-glutamate + ADP + phosphate + H(+). Allows the formation of correctly charged Gln-tRNA(Gln) through the transamidation of misacylated Glu-tRNA(Gln) in organisms which lack glutaminyl-tRNA synthetase. The reaction takes place in the presence of glutamine and ATP through an activated gamma-phospho-Glu-tRNA(Gln). The polypeptide is Glutamyl-tRNA(Gln) amidotransferase subunit A (Prochlorococcus marinus (strain MIT 9211)).